A 40-amino-acid chain; its full sequence is Photosystem II reaction center protein Y (40 aa).

The chain crosses the membrane as a helical span at residues 5–23 (LIVVLAPILLAGGWAVFNI).

This sequence belongs to the PsbY family. As to quaternary structure, PSII is composed of 1 copy each of membrane proteins PsbA, PsbB, PsbC, PsbD, PsbE, PsbF, PsbH, PsbI, PsbJ, PsbK, PsbL, PsbM, PsbT, PsbX, PsbY, PsbZ, Psb30/Ycf12, peripheral proteins PsbO, CyanoQ (PsbQ), PsbU, PsbV and a large number of cofactors. It forms dimeric complexes.

The protein resides in the cellular thylakoid membrane. Loosely associated component of the core of photosystem II (PSII), it is not always seen in crystals. PSII is a light-driven water plastoquinone oxidoreductase, using light energy to abstract electrons from H(2)O, generating a proton gradient subsequently used for ATP formation. This Synechococcus elongatus (strain ATCC 33912 / PCC 7942 / FACHB-805) (Anacystis nidulans R2) protein is Photosystem II reaction center protein Y.